Here is a 696-residue protein sequence, read N- to C-terminus: DNA ligase (696 aa).

NAD(+)-binding positions include 43-47, 92-93, and Glu122; these read DGEFD and SL. Residue Lys124 is the N6-AMP-lysine intermediate of the active site. Positions 145, 185, 301, and 325 each coordinate NAD(+). 4 residues coordinate Zn(2+): Cys419, Cys422, Cys438, and Cys444. In terms of domain architecture, BRCT spans 608–696; sequence SIPRNLEGLS…GPDAVAESGV (89 aa).

It belongs to the NAD-dependent DNA ligase family. LigA subfamily. The cofactor is Mg(2+). Mn(2+) is required as a cofactor.

The catalysed reaction is NAD(+) + (deoxyribonucleotide)n-3'-hydroxyl + 5'-phospho-(deoxyribonucleotide)m = (deoxyribonucleotide)n+m + AMP + beta-nicotinamide D-nucleotide.. Its function is as follows. DNA ligase that catalyzes the formation of phosphodiester linkages between 5'-phosphoryl and 3'-hydroxyl groups in double-stranded DNA using NAD as a coenzyme and as the energy source for the reaction. It is essential for DNA replication and repair of damaged DNA. The chain is DNA ligase from Rhodococcus jostii (strain RHA1).